A 326-amino-acid polypeptide reads, in one-letter code: ELMO domain-containing protein 1 (326 aa).

One can recognise an ELMO domain in the interval 133-306 (QHEEMLLKLW…KFRKRIIKQL (174 aa)).

Its function is as follows. Acts as a GTPase-activating protein (GAP) toward guanine nucleotide exchange factors like ARL2, ARL3, ARF1 and ARF6, but not for GTPases outside the Arf family. The sequence is that of ELMO domain-containing protein 1 (ELMOD1) from Pongo abelii (Sumatran orangutan).